The chain runs to 432 residues: Monoacylglycerol lipase ABHD2 (432 aa).

Residues 1-14 lie on the Cytoplasmic side of the membrane; the sequence is MNTHESEVYTVAPE. A helical; Signal-anchor for type II membrane protein transmembrane segment spans residues 15–35; the sequence is MPAMFDGMKLAAVATVLYVIV. Topologically, residues 36–432 are extracellular; sequence RCLNLKSPTA…NQTTCQENTS (397 aa). Residues 132–383 enclose the AB hydrolase-1 domain; the sequence is TMVICPGIGN…HGGHLGFFEG (252 aa). An N-linked (GlcNAc...) asparagine glycan is attached at Asn-141. The Nucleophile role is filled by Ser-212. Asn-225 is a glycosylation site (N-linked (GlcNAc...) asparagine). Residues Asp-346 and His-377 each act as charge relay system in the active site. Residues 413 to 432 form a disordered region; that stretch reads PPCQSKDAQSNQTTCQENTS. The span at 418–432 shows a compositional bias: polar residues; the sequence is KDAQSNQTTCQENTS. A glycan (N-linked (GlcNAc...) asparagine) is linked at Asn-423.

The protein belongs to the AB hydrolase superfamily. AB hydrolase 4 family.

It is found in the cell membrane. It carries out the reaction Hydrolyzes glycerol monoesters of long-chain fatty acids.. The enzyme catalyses an acetyl ester + H2O = an aliphatic alcohol + acetate + H(+). It catalyses the reaction a triacylglycerol + H2O = a diacylglycerol + a fatty acid + H(+). The catalysed reaction is 2-(5Z,8Z,11Z,14Z-eicosatetraenoyl)-glycerol + H2O = glycerol + (5Z,8Z,11Z,14Z)-eicosatetraenoate + H(+). It carries out the reaction a butanoate ester + H2O = an aliphatic alcohol + butanoate + H(+). The enzyme catalyses hexadecanoate ester + H2O = an aliphatic alcohol + hexadecanoate + H(+). With respect to regulation, acylglycerol lipase activity is activated upon binding to progesterone. Functionally, progesterone-dependent acylglycerol lipase that catalyzes hydrolysis of endocannabinoid arachidonoylglycerol (AG) from cell membrane. Acts as a progesterone receptor: progesterone-binding activates the acylglycerol lipase activity, mediating degradation of 1-arachidonoylglycerol (1AG) and 2-arachidonoylglycerol (2AG) to glycerol and arachidonic acid (AA). Also displays an ester hydrolase activity against acetyl ester, butanoate ester and hexadecanoate ester. Plays a key role in sperm capacitation in response to progesterone by mediating degradation of 2AG, an inhibitor of the sperm calcium channel CatSper, leading to calcium influx via CatSper and sperm activation. May also play a role in smooth muscle cells migration. The polypeptide is Monoacylglycerol lipase ABHD2 (abhd2a) (Danio rerio (Zebrafish)).